A 421-amino-acid polypeptide reads, in one-letter code: Homoserine dehydrogenase (421 aa).

Residues Val15, Ala34, and Val44 each contribute to the NAD(+) site. Position 15 (Val15) interacts with NADP(+). NADPH is bound at residue Val15. The NADP(+) site is built by Arg46 and Lys103. Residues Arg46 and Lys103 each contribute to the NADPH site. Glu125, Val128, Gly130, and Ile132 together coordinate Na(+). NADP(+) is bound by residues Gly183 and Glu186. Residues Glu186 and Asp197 each contribute to the L-homoserine site. Lys201 acts as the Proton donor in catalysis. Residue Gly298 participates in NAD(+) binding. Gly298 lines the NADP(+) pocket. Position 298 (Gly298) interacts with NADPH. Residues 343–418 (YARLLVSDEK…SVLDTPKMIR (76 aa)) enclose the ACT domain.

Belongs to the homoserine dehydrogenase family. A metal cation is required as a cofactor.

The catalysed reaction is L-homoserine + NADP(+) = L-aspartate 4-semialdehyde + NADPH + H(+). It carries out the reaction L-homoserine + NAD(+) = L-aspartate 4-semialdehyde + NADH + H(+). Its pathway is amino-acid biosynthesis; L-methionine biosynthesis via de novo pathway; L-homoserine from L-aspartate: step 3/3. It functions in the pathway amino-acid biosynthesis; L-threonine biosynthesis; L-threonine from L-aspartate: step 3/5. Functionally, catalyzes the conversion of L-aspartate-beta-semialdehyde (L-Asa) to L-homoserine (L-Hse), the third step in the biosynthesis of threonine and methionine from aspartate. The protein is Homoserine dehydrogenase (hom) of Helicobacter pylori (strain ATCC 700392 / 26695) (Campylobacter pylori).